The primary structure comprises 110 residues: Large ribosomal subunit protein uL22 (110 aa).

The protein belongs to the universal ribosomal protein uL22 family. As to quaternary structure, part of the 50S ribosomal subunit.

Functionally, this protein binds specifically to 23S rRNA; its binding is stimulated by other ribosomal proteins, e.g. L4, L17, and L20. It is important during the early stages of 50S assembly. It makes multiple contacts with different domains of the 23S rRNA in the assembled 50S subunit and ribosome. Its function is as follows. The globular domain of the protein is located near the polypeptide exit tunnel on the outside of the subunit, while an extended beta-hairpin is found that lines the wall of the exit tunnel in the center of the 70S ribosome. The sequence is that of Large ribosomal subunit protein uL22 from Shewanella denitrificans (strain OS217 / ATCC BAA-1090 / DSM 15013).